The primary structure comprises 1487 residues: Secretory phospholipase A2 receptor (1487 aa).

The first 26 residues, 1–26 (MVQWLAMLQLLWLQQLLLLGIHQGIA), serve as a signal peptide directing secretion. At 27–1396 (QDLTHIQEPS…AQPEKGLSHS (1370 aa)) the chain is on the extracellular side. Residues 42–165 (KGIFIIQSES…SSGGDICEHP (124 aa)) form the Ricin B-type lectin domain. Cystine bridges form between C55/C68, C93/C110, C181/C207, and C195/C222. N97 carries an N-linked (GlcNAc...) asparagine glycan. The Fibronectin type-II domain occupies 176-224 (AHGMPCVFPFQFKGHWHHDCIREGQKEHLLWCATTSRYEEDEKWGFCPD). N239 is a glycosylation site (N-linked (GlcNAc...) asparagine). C-type lectin domains lie at 241–357 (SSRI…YICK), 387–504 (FNRK…YICK), 524–643 (HGRF…MSLC), 673–797 (GLAS…WICR), 819–938 (YQNA…SICK), and 964–1095 (FNYK…GFVC). 10 cysteine pairs are disulfide-bonded: C263–C356, C333–C348, C408–C503, C480–C495, C617–C634, C699–C796, C774–C788, C840–C937, C914–C929, and C1066–C1086. N-linked (GlcNAc...) asparagine glycosylation is present at N928. N-linked (GlcNAc...) asparagine glycosylation is found at N1107, N1122, and N1131. C-type lectin domains are found at residues 1120–1231 (YGNR…GAIC) and 1256–1377 (FKGN…FICK). 3 disulfide bridges follow: C1208–C1222, C1279–C1376, and C1353–C1368. The chain crosses the membrane as a helical span at residues 1397–1417 (IVPVTVTLTLIIALGIFMLCF). Topologically, residues 1418–1487 (WIYKQKSDIF…HKGRPICISP (70 aa)) are cytoplasmic. The short motif at 1435 to 1441 (GSYYPTL) is the Endocytosis signal element. Residues 1463–1475 (DEEVRDAPATESK) are compositionally biased toward basic and acidic residues. Residues 1463–1487 (DEEVRDAPATESKRGHKGRPICISP) form a disordered region.

As to quaternary structure, interacts with sPLA2-IB/PLA2G1B; this interaction mediates intracellular signaling as well as clearance of extracellular sPLA2-IB/PLA2G1B via endocytotic pathway. Interacts with sPLA2-X/PLA2G10; this interaction mediates sPLA2-X/PLA2G10 clearance and inactivation. In terms of processing, the secretory phospholipase A2 receptor form may be produced by the action of metalloproteinases. It contains all extracellular domains and only lacks transmembrane and cytosolic regions. It is however unclear whether this form is produced by proteolytic cleavage as suggested by some experiments reported by PubMed:11830583, or by alternative splicing. In terms of tissue distribution, widely expressed. Present in type II alveolar epithelial cells and a subset of splenic lymphocytes. Present at the surface of polymorphonuclear neutrophils (at protein level).

The protein resides in the cell membrane. It is found in the secreted. Functionally, receptor for secretory phospholipase A2 (sPLA2). Acts as a receptor for phospholipases sPLA2-IB/PLA2G1B, sPLA2-X/PLA2G10 and, with lower affinity, sPLA2-IIA/PLA2G2A. Also able to bind to snake PA2-like toxins. Although its precise function remains unclear, binding of sPLA2 to its receptor participates in both positive and negative regulation of sPLA2 functions as well as clearance of sPLA2. Binding of sPLA2-IB/PLA2G1B induces various effects depending on the cell type, such as activation of the mitogen-activated protein kinase (MAPK) cascade to induce cell proliferation, the production of lipid mediators, selective release of arachidonic acid in bone marrow-derived mast cells. In neutrophils, binding of sPLA2-IB/PLA2G1B can activate p38 MAPK to stimulate elastase release and cell adhesion. May be involved in responses in pro-inflammatory cytokine productions during endotoxic shock. Also has endocytic properties and rapidly internalizes sPLA2 ligands, which is particularly important for the clearance of extracellular sPLA2s to protect their potent enzymatic activities. The soluble secretory phospholipase A2 receptor form is circulating and acts as a negative regulator of sPLA2 functions by blocking the biological functions of sPLA2-IB/PLA2G1B and sPLA2-X/PLA2G10. In podocytes, binding of sPLA2-IB/PLA2G1B can regulate podocyte survival and glomerular homeostasis. This Mus musculus (Mouse) protein is Secretory phospholipase A2 receptor (Pla2r1).